Consider the following 153-residue polypeptide: Cytochrome c oxidase subunit 5A, mitochondrial (153 aa).

A mitochondrion-targeting transit peptide spans 1-20 (MLRNTFTRAGGLSRITSVRF). Topologically, residues 21-88 (AQTHALSNAA…EWGPRRPVLN (68 aa)) are mitochondrial matrix. Residues 89 to 111 (KGDSSFIAKGVAAGLLFSVGLFA) form a helical membrane-spanning segment. Residues 112–153 (VVRMAGGQDAKTMNKEWQLKSDEYLKSKNANPWGGYSQVQSK) are Mitochondrial intermembrane-facing.

The protein belongs to the cytochrome c oxidase IV family. As to quaternary structure, component of the cytochrome c oxidase (complex IV, CIV), a multisubunit enzyme composed of 12 subunits. The complex is composed of a catalytic core of 3 subunits COX1, COX2 and COX3, encoded in the mitochondrial DNA, and 9 supernumerary subunits COX4, COX5A (or COX5B), COX6, COX7, COX8, COX9, COX12, COX13 and COX26, which are encoded in the nuclear genome. COX5A is the predominant subunit V during aerobic/normoxic growth, it gets replaced by COX5B under anaerobic/hypoxic conditions. The complex exists as a monomer or a dimer and forms supercomplexes (SCs) in the inner mitochondrial membrane with a dimer of ubiquinol-cytochrome c oxidoreductase (cytochrome b-c1 complex, complex III, CIII), resulting in 2 different assemblies (supercomplexes III(2)IV and III(2)IV(2)). COX5A interacts with COR1, CYT1 and QCR6 at the CIII-CIV interface.

Its subcellular location is the mitochondrion inner membrane. Its pathway is energy metabolism; oxidative phosphorylation. Functionally, component of the cytochrome c oxidase, the last enzyme in the mitochondrial electron transport chain which drives oxidative phosphorylation. The respiratory chain contains 3 multisubunit complexes succinate dehydrogenase (complex II, CII), ubiquinol-cytochrome c oxidoreductase (cytochrome b-c1 complex, complex III, CIII) and cytochrome c oxidase (complex IV, CIV), that cooperate to transfer electrons derived from NADH and succinate to molecular oxygen, creating an electrochemical gradient over the inner membrane that drives transmembrane transport and the ATP synthase. Cytochrome c oxidase is the component of the respiratory chain that catalyzes the reduction of oxygen to water. Electrons originating from reduced cytochrome c in the intermembrane space (IMS) are transferred via the dinuclear copper A center (CU(A)) of COX2 and heme A of COX1 to the active site in COX1, a binuclear center (BNC) formed by heme A3 and copper B (CU(B)). The BNC reduces molecular oxygen to 2 water molecules using 4 electrons from cytochrome c in the IMS and 4 protons from the mitochondrial matrix. The chain is Cytochrome c oxidase subunit 5A, mitochondrial (COX5A) from Saccharomyces cerevisiae (strain ATCC 204508 / S288c) (Baker's yeast).